A 247-amino-acid chain; its full sequence is 3-deoxy-manno-octulosonate cytidylyltransferase (247 aa).

The protein belongs to the KdsB family.

It is found in the cytoplasm. It carries out the reaction 3-deoxy-alpha-D-manno-oct-2-ulosonate + CTP = CMP-3-deoxy-beta-D-manno-octulosonate + diphosphate. Its pathway is nucleotide-sugar biosynthesis; CMP-3-deoxy-D-manno-octulosonate biosynthesis; CMP-3-deoxy-D-manno-octulosonate from 3-deoxy-D-manno-octulosonate and CTP: step 1/1. It functions in the pathway bacterial outer membrane biogenesis; lipopolysaccharide biosynthesis. Activates KDO (a required 8-carbon sugar) for incorporation into bacterial lipopolysaccharide in Gram-negative bacteria. In Methylobacterium nodulans (strain LMG 21967 / CNCM I-2342 / ORS 2060), this protein is 3-deoxy-manno-octulosonate cytidylyltransferase.